We begin with the raw amino-acid sequence, 426 residues long: Putative nickel insertion protein (426 aa).

This sequence belongs to the LarC family.

The chain is Putative nickel insertion protein from Nostoc sp. (strain PCC 7120 / SAG 25.82 / UTEX 2576).